Reading from the N-terminus, the 357-residue chain is tRNA-specific 2-thiouridylase MnmA (357 aa).

ATP contacts are provided by residues 3 to 10 (AMSGGVDS) and Leu-29. Cys-98 (nucleophile) is an active-site residue. Cys-98 and Cys-196 are joined by a disulfide. Residue Gly-122 participates in ATP binding. Positions 146–148 (KDQ) are interaction with tRNA. The Cysteine persulfide intermediate role is filled by Cys-196. The segment at 302–303 (RY) is interaction with tRNA.

It belongs to the MnmA/TRMU family.

It is found in the cytoplasm. The enzyme catalyses S-sulfanyl-L-cysteinyl-[protein] + uridine(34) in tRNA + AH2 + ATP = 2-thiouridine(34) in tRNA + L-cysteinyl-[protein] + A + AMP + diphosphate + H(+). Its function is as follows. Catalyzes the 2-thiolation of uridine at the wobble position (U34) of tRNA, leading to the formation of s(2)U34. This is tRNA-specific 2-thiouridylase MnmA from Moorella thermoacetica (strain ATCC 39073 / JCM 9320).